A 564-amino-acid chain; its full sequence is Proline--tRNA ligase (564 aa).

The protein belongs to the class-II aminoacyl-tRNA synthetase family. ProS type 1 subfamily. Homodimer.

Its subcellular location is the cytoplasm. It catalyses the reaction tRNA(Pro) + L-proline + ATP = L-prolyl-tRNA(Pro) + AMP + diphosphate. Functionally, catalyzes the attachment of proline to tRNA(Pro) in a two-step reaction: proline is first activated by ATP to form Pro-AMP and then transferred to the acceptor end of tRNA(Pro). As ProRS can inadvertently accommodate and process non-cognate amino acids such as alanine and cysteine, to avoid such errors it has two additional distinct editing activities against alanine. One activity is designated as 'pretransfer' editing and involves the tRNA(Pro)-independent hydrolysis of activated Ala-AMP. The other activity is designated 'posttransfer' editing and involves deacylation of mischarged Ala-tRNA(Pro). The misacylated Cys-tRNA(Pro) is not edited by ProRS. This Coxiella burnetii (strain RSA 331 / Henzerling II) protein is Proline--tRNA ligase.